Here is a 253-residue protein sequence, read N- to C-terminus: Ubiquinone/menaquinone biosynthesis C-methyltransferase UbiE (253 aa).

S-adenosyl-L-methionine contacts are provided by residues Thr-76, Asp-97, and 125-126 (NA).

It belongs to the class I-like SAM-binding methyltransferase superfamily. MenG/UbiE family.

The catalysed reaction is a 2-demethylmenaquinol + S-adenosyl-L-methionine = a menaquinol + S-adenosyl-L-homocysteine + H(+). It catalyses the reaction a 2-methoxy-6-(all-trans-polyprenyl)benzene-1,4-diol + S-adenosyl-L-methionine = a 5-methoxy-2-methyl-3-(all-trans-polyprenyl)benzene-1,4-diol + S-adenosyl-L-homocysteine + H(+). Its pathway is quinol/quinone metabolism; menaquinone biosynthesis; menaquinol from 1,4-dihydroxy-2-naphthoate: step 2/2. It functions in the pathway cofactor biosynthesis; ubiquinone biosynthesis. Methyltransferase required for the conversion of demethylmenaquinol (DMKH2) to menaquinol (MKH2) and the conversion of 2-polyprenyl-6-methoxy-1,4-benzoquinol (DDMQH2) to 2-polyprenyl-3-methyl-6-methoxy-1,4-benzoquinol (DMQH2). This chain is Ubiquinone/menaquinone biosynthesis C-methyltransferase UbiE, found in Stenotrophomonas maltophilia (strain R551-3).